Reading from the N-terminus, the 467-residue chain is MSKGTLFDKVWDLHTVGTLPSGLTQLFIGLHLVHEVTSPQAFAMLRERGLKVLFPERTVATVDHIVPTENQARPFVDRLAEEMIQALEQNCQENNITFYNIGSGNQGIVHVIAPELGLTQPGMTIACGDSHTSSHGAFGAIAFGIGTSQVRDVLASQTLSLSKLKVRKIEVNGALNPGVYAKDVILHIIRTLGVKGGVGYAYEYAGTTFEQMNMEERMTVCNMAIEGGARCGYVNPDQVTYDYLQGRDFAPQGADWEKAVTWWESIKSDADAEYDDVIVFNAADIPPTVTWGITPGQGIGVNQLIPQPEELLEEDRFVAEEAYRYMDLYPGQPIKGTKIDVCFIGSCTNGRLTDLQEAAKIAKGRRVAAGVKAFVVPGSERVKKAAEAEGLDKIFEAAGFEWREPGCSMCLAMNPDKLEGRQISASSSNRNFKGRQGSASGRTLLMSPAMVATAAIQGEVADVRELL.

3 residues coordinate [4Fe-4S] cluster: Cys-347, Cys-407, and Cys-410.

It belongs to the aconitase/IPM isomerase family. LeuC type 1 subfamily. As to quaternary structure, heterodimer of LeuC and LeuD. [4Fe-4S] cluster is required as a cofactor.

The enzyme catalyses (2R,3S)-3-isopropylmalate = (2S)-2-isopropylmalate. It functions in the pathway amino-acid biosynthesis; L-leucine biosynthesis; L-leucine from 3-methyl-2-oxobutanoate: step 2/4. Functionally, catalyzes the isomerization between 2-isopropylmalate and 3-isopropylmalate, via the formation of 2-isopropylmaleate. The protein is 3-isopropylmalate dehydratase large subunit of Nostoc sp. (strain PCC 7120 / SAG 25.82 / UTEX 2576).